The sequence spans 130 residues: Small ribosomal subunit protein uS9 (130 aa).

Belongs to the universal ribosomal protein uS9 family.

In Pseudomonas fluorescens (strain ATCC BAA-477 / NRRL B-23932 / Pf-5), this protein is Small ribosomal subunit protein uS9.